The chain runs to 189 residues: MATDVFSSKNLAVQAQKKILGKMASSKYIATSLIDDTSGEVLDELYQLTREYTQSKKESEKVIKNLIKTVIKLAVLYRNNQFNEEEIALMEKFKRKVHQLAMTVVSFYQVEYTFDRNVLSKLLNECRELLHQVIQRHLTAKSHGRVNNVFDHFSNCEFLAALYNPFGPFKQHLQRLCEGVNKMLDEDNI.

The protein belongs to the TNFAIP8 family.

Its subcellular location is the cytoplasm. Its function is as follows. Acts as a negative mediator of apoptosis. This chain is Tumor necrosis factor alpha-induced protein 8 (tnfaip8), found in Xenopus tropicalis (Western clawed frog).